We begin with the raw amino-acid sequence, 243 residues long: Leucinostatins biosynthesis cluster protein S (243 aa).

Its function is as follows. Part of the gene cluster that mediates the biosynthesis of the lipopeptide antibiotics leucinostatins that show extensive biological activities, including antimalarial, antiviral, antibacterial, antifungal, and antitumor activities, as well as phytotoxic. The function of lcsS within the leucinostatins biosynthesis has not been identified yet. This is Leucinostatins biosynthesis cluster protein S from Purpureocillium lilacinum (Paecilomyces lilacinus).